A 561-amino-acid polypeptide reads, in one-letter code: uncharacterized protein (561 aa).

Polar residues predominate over residues 1–11 (MSQVSLPSQLK). 2 disordered regions span residues 1 to 22 (MSQV…SRCR) and 522 to 561 (CSLP…IMLP). Residues 541 to 561 (QQPQQAQAEQAQQPQQQIMLP) are compositionally biased toward low complexity.

This sequence to Synechocystis PCC 6803 sll0335 and to M.tuberculosis Rv2567.

This is an uncharacterized protein from Mycobacterium leprae (strain TN).